A 382-amino-acid polypeptide reads, in one-letter code: MKITKITTYRLPPRWMFLKIETDEGIVGWGEPVIEGRARTVEAAVHELSDYLIGQDPARINDIWQVLYRAGFYRGGPILMSAIAGIDQALWDIKGKALGVPVYQLLGGLVRDKIKAYSWVGGDRPSEVIAGIKKLTEIGFDTFKLNGCEEMGIIDNSRKVDAAVAVVAEIREAFGNSIEFGLDFHGRVDAPMAKILIKELEPYRPLFIEEPVLAEQAEYYPRLAAQTHLPIAAGERMFSRFDFKRVLADGGLAIIQPDLSHAGGITECFKIAAMAEAYDVALAPHCPLGPIALASCLHLDFVARNAVLQEQSMGIHYNKGAELLDYVINKEDFAMTDGHFYPLNKPGLGVEINEELVIERSKNAPDWRNPVWRYPDGAVAEW.

Position 183 (aspartate 183) interacts with Mg(2+). The Proton donor role is filled by histidine 185. The Mg(2+) site is built by glutamate 209 and glutamate 235. Histidine 285 acts as the Proton acceptor in catalysis.

It belongs to the mandelate racemase/muconate lactonizing enzyme family. GalD subfamily. The cofactor is Mg(2+).

The catalysed reaction is D-galactonate = 2-dehydro-3-deoxy-D-galactonate + H2O. Its pathway is carbohydrate acid metabolism; D-galactonate degradation; D-glyceraldehyde 3-phosphate and pyruvate from D-galactonate: step 1/3. Its function is as follows. Catalyzes the dehydration of D-galactonate to 2-keto-3-deoxy-D-galactonate. The protein is D-galactonate dehydratase of Pectobacterium atrosepticum (strain SCRI 1043 / ATCC BAA-672) (Erwinia carotovora subsp. atroseptica).